The chain runs to 1529 residues: ABC multidrug transporter AFR2 (1529 aa).

Gly residues predominate over residues 1–10; it reads MAFAGVGQGL. A disordered region spans residues 1 to 21; that stretch reads MAFAGVGQGLGTYDRTEQTSG. Residues 144–394 enclose the ABC transporter 1 domain; sequence GALRDLISNR…FVDMGFHCPS (251 aa). N-linked (GlcNAc...) asparagine glycans are attached at residues N235 and N318. Helical transmembrane passes span 505-525, 539-559, 589-609, 614-634, and 648-668; these read LTLT…SVFY, ALLF…ILIL, IPYK…MTNL, GPYF…SMLF, and LAPA…AVNV. N742 carries N-linked (GlcNAc...) asparagine glycosylation. Residues 757–777 form a helical membrane-spanning segment; it reads GILIGFFLFFTAIYMTATEFI. The ABC transporter 2 domain occupies 845-1087; the sequence is FSWKDVVYDI…ILIDYFEKNG (243 aa). Residue 881 to 888 participates in ATP binding; that stretch reads GVSGAGKT. A run of 5 helical transmembrane segments spans residues 1193-1213, 1227-1247, 1268-1288, 1314-1334, and 1353-1373; these read YIWS…FSFF, FSVF…MPNF, IFIL…GAVI, LMFL…IMIV, and MCLI…FWMF. N-linked (GlcNAc...) asparagine glycosylation occurs at N1434. Residues 1465-1485 form a helical membrane-spanning segment; sequence FGLLWAYVVFNIIAAVGIYWL. Residues 1493–1529 form a disordered region; the sequence is GKEQASEPEGVQEKLVPAQSSEKKRESVSRGSESTAA.

This sequence belongs to the ABC transporter superfamily. ABCG family. PDR (TC 3.A.1.205) subfamily.

Its subcellular location is the cell membrane. It catalyses the reaction itraconazole(in) + ATP + H2O = itraconazole(out) + ADP + phosphate + H(+). It carries out the reaction voriconazole(in) + ATP + H2O = voriconazole(out) + ADP + phosphate + H(+). The enzyme catalyses fluconazole(in) + ATP + H2O = fluconazole(out) + ADP + phosphate + H(+). Functionally, pleiotropic ABC efflux transporter that confers resistance to structurally and functionally unrelated compounds including azoles such as fluconazole (FLC), itraconazole (ITC), posaconazole (POS), and voriconazole (VRC). This Cryptococcus neoformans var. grubii serotype A (strain H99 / ATCC 208821 / CBS 10515 / FGSC 9487) (Filobasidiella neoformans var. grubii) protein is ABC multidrug transporter AFR2.